A 223-amino-acid polypeptide reads, in one-letter code: Ribosomal RNA small subunit methyltransferase G (223 aa).

S-adenosyl-L-methionine-binding positions include G90, L95, 141–142 (VE), and R156.

It belongs to the methyltransferase superfamily. RNA methyltransferase RsmG family.

The protein localises to the cytoplasm. It carries out the reaction guanosine(527) in 16S rRNA + S-adenosyl-L-methionine = N(7)-methylguanosine(527) in 16S rRNA + S-adenosyl-L-homocysteine. Functionally, specifically methylates the N7 position of guanine in position 527 of 16S rRNA. In Ralstonia nicotianae (strain ATCC BAA-1114 / GMI1000) (Ralstonia solanacearum), this protein is Ribosomal RNA small subunit methyltransferase G.